The chain runs to 233 residues: Probable 2-phosphosulfolactate phosphatase (233 aa).

The protein belongs to the ComB family. The cofactor is Mg(2+).

The enzyme catalyses (2R)-O-phospho-3-sulfolactate + H2O = (2R)-3-sulfolactate + phosphate. The sequence is that of Probable 2-phosphosulfolactate phosphatase from Symbiobacterium thermophilum (strain DSM 24528 / JCM 14929 / IAM 14863 / T).